The sequence spans 597 residues: Peptidyl-prolyl cis-trans isomerase-like 2 (597 aa).

Positions 41 to 114 (KKLPFNFCAA…TTDSDENKGD (74 aa)) constitute a U-box domain. The PPIase cyclophilin-type domain occupies 328 to 483 (NKGYVRMETN…NKIVIKDMII (156 aa)). Residues 495-519 (KKQKEGEEERKREVARQGGTEDDRT) show a composition bias toward basic and acidic residues. Disordered stretches follow at residues 495 to 521 (KKQK…RTTW) and 560 to 597 (ATTT…FDGW).

Belongs to the cyclophilin-type PPIase family. PPIL2 subfamily.

It is found in the nucleus. The enzyme catalyses [protein]-peptidylproline (omega=180) = [protein]-peptidylproline (omega=0). It catalyses the reaction S-ubiquitinyl-[E2 ubiquitin-conjugating enzyme]-L-cysteine + [acceptor protein]-L-lysine = [E2 ubiquitin-conjugating enzyme]-L-cysteine + N(6)-ubiquitinyl-[acceptor protein]-L-lysine.. It functions in the pathway protein modification; protein ubiquitination. Its function is as follows. May catalyze the cis-trans isomerization of proline imidic peptide bonds in oligopeptides thereby assisting the folding of proteins. May also function as a chaperone, playing a role in intracellular transport of proteins. May also have a protein ubiquitin ligase activity acting as an E3 ubiquitin protein ligase or as a ubiquitin-ubiquitin ligase promoting elongation of ubiquitin chains on proteins. This chain is Peptidyl-prolyl cis-trans isomerase-like 2 (ppi-2), found in Neurospora crassa (strain ATCC 24698 / 74-OR23-1A / CBS 708.71 / DSM 1257 / FGSC 987).